A 271-amino-acid polypeptide reads, in one-letter code: 3-methyl-2-oxobutanoate hydroxymethyltransferase (271 aa).

Mg(2+)-binding residues include D53 and D92. 3-methyl-2-oxobutanoate-binding positions include 53–54 (DS), D92, and K120. Position 122 (E122) interacts with Mg(2+). The Proton acceptor role is filled by E189.

Belongs to the PanB family. Homodecamer; pentamer of dimers. Mg(2+) is required as a cofactor.

It is found in the cytoplasm. The enzyme catalyses 3-methyl-2-oxobutanoate + (6R)-5,10-methylene-5,6,7,8-tetrahydrofolate + H2O = 2-dehydropantoate + (6S)-5,6,7,8-tetrahydrofolate. It functions in the pathway cofactor biosynthesis; (R)-pantothenate biosynthesis; (R)-pantoate from 3-methyl-2-oxobutanoate: step 1/2. Its function is as follows. Catalyzes the reversible reaction in which hydroxymethyl group from 5,10-methylenetetrahydrofolate is transferred onto alpha-ketoisovalerate to form ketopantoate. This Burkholderia mallei (strain NCTC 10247) protein is 3-methyl-2-oxobutanoate hydroxymethyltransferase.